We begin with the raw amino-acid sequence, 260 residues long: CD40 ligand (260 aa).

Over M1 to K22 the chain is Cytoplasmic. Residues I23–L46 traverse the membrane as a helical; Signal-anchor for type II membrane protein segment. Over H47 to L260 the chain is Extracellular. The region spanning V121–L260 is the THD domain. An intrachain disulfide couples C177 to C217. N-linked (GlcNAc...) asparagine glycosylation is present at N239.

The protein belongs to the tumor necrosis factor family. In terms of assembly, homotrimer. Interacts with CD28. CD40 ligand, soluble form: Exists as either a monomer or a homotrimer. Forms a ternary complex between CD40 and integrins for CD40-CD40LG signaling. Post-translationally, the soluble form derives from the membrane form by proteolytic processing.

The protein localises to the cell membrane. The protein resides in the cell surface. Its subcellular location is the secreted. In terms of biological role, cytokine that acts as a ligand to CD40/TNFRSF5. Costimulates T-cell proliferation and cytokine production. Its cross-linking on T-cells generates a costimulatory signal which enhances the production of IL4 and IL10 in conjunction with the TCR/CD3 ligation and CD28 costimulation. Induces the activation of NF-kappa-B. Induces the activation of kinases MAPK8 and PAK2 in T-cells. Mediates B-cell proliferation in the absence of co-stimulus as well as IgE production in the presence of IL4. Involved in immunoglobulin class switching. Its function is as follows. Acts as a ligand for integrins, specifically ITGA5:ITGB1 and ITGAV:ITGB3; both integrins and the CD40 receptor are required for activation of CD40-CD40LG signaling, which have cell-type dependent effects, such as B-cell activation, NF-kappa-B signaling and anti-apoptotic signaling. This Felis catus (Cat) protein is CD40 ligand (CD40LG).